The sequence spans 124 residues: Small ribosomal subunit protein bS6 (124 aa).

Belongs to the bacterial ribosomal protein bS6 family.

Its function is as follows. Binds together with bS18 to 16S ribosomal RNA. The protein is Small ribosomal subunit protein bS6 of Actinobacillus pleuropneumoniae serotype 7 (strain AP76).